We begin with the raw amino-acid sequence, 543 residues long: MFS-type transporter pyvG (543 aa).

A disordered region spans residues 24–71; the sequence is PPTEQQPGFQLPPPYRLAATRTQPQQQQEQEQEQEQAKPATRPPWNEP. N94 carries N-linked (GlcNAc...) asparagine glycosylation. A run of 12 helical transmembrane segments spans residues 101 to 121, 141 to 161, 178 to 198, 203 to 223, 230 to 250, 259 to 279, 335 to 355, 374 to 394, 415 to 435, 440 to 460, 476 to 496, and 512 to 532; these read LLVYLEVNLITFMVYMSVAIF, LGMSLYVLGYGTGPMIWSPLS, IFLLLSIPTAVVNNVPGFLIL, GFFGSPGLATGGASIADVTGL, LYVWAVCSIAGPAVAPVIAGF, WSMWEVLWAAGGCFVFLLFLP, PAILFTTVYIGLVYAIFYSYF, GLIFLGAIVGTLLVLPGYFAF, LVPALCGSVLVPVGLFLFAWT, LHWVVPTVGLVLEVAGMSLVI, ASLFAINDLARAYLAFAAIMW, and LLAGLTVGCVGGMFTLYWWGP.

It belongs to the major facilitator superfamily. CAR1 family.

The protein resides in the cell membrane. In terms of biological role, MFS-type transporter; part of the gene cluster that mediates the biosynthesis of pyranoviolin A, a pyranonigrin analog with a C-3 methoxy group. May be involved in the secretion of pyranoviolin A. The protein is MFS-type transporter pyvG of Aspergillus violaceofuscus (strain CBS 115571).